Reading from the N-terminus, the 66-residue chain is Large ribosomal subunit protein bL35 (66 aa).

Belongs to the bacterial ribosomal protein bL35 family.

In Neorickettsia sennetsu (strain ATCC VR-367 / Miyayama) (Ehrlichia sennetsu), this protein is Large ribosomal subunit protein bL35.